Consider the following 641-residue polypeptide: Phosphomethylpyrimidine synthase (641 aa).

Polar residues predominate over residues 1 to 13 (MNIRSNPDTTRPA). The disordered stretch occupies residues 1–21 (MNIRSNPDTTRPAVTTGGLPS). Substrate contacts are provided by residues N221, M250, Y279, H315, 335-337 (SRG), 376-379 (DGLR), and E415. H419 contacts Zn(2+). Residue Y442 coordinates substrate. Zn(2+) is bound at residue H483. Residues C563, C566, and C571 each contribute to the [4Fe-4S] cluster site.

Belongs to the ThiC family. Homodimer. The cofactor is [4Fe-4S] cluster.

The catalysed reaction is 5-amino-1-(5-phospho-beta-D-ribosyl)imidazole + S-adenosyl-L-methionine = 4-amino-2-methyl-5-(phosphooxymethyl)pyrimidine + CO + 5'-deoxyadenosine + formate + L-methionine + 3 H(+). Its pathway is cofactor biosynthesis; thiamine diphosphate biosynthesis. Its function is as follows. Catalyzes the synthesis of the hydroxymethylpyrimidine phosphate (HMP-P) moiety of thiamine from aminoimidazole ribotide (AIR) in a radical S-adenosyl-L-methionine (SAM)-dependent reaction. In Rhodopseudomonas palustris (strain BisB5), this protein is Phosphomethylpyrimidine synthase.